Here is a 325-residue protein sequence, read N- to C-terminus: uncharacterized protein (325 aa).

2 coiled-coil regions span residues 38-69 (VHVANNLNNFVQQHKQLQNQMPQFQNQFQNQS) and 201-229 (ANTDRFNAELELKESDLEKINETLKLEFK).

This is an uncharacterized protein from Acanthamoeba polyphaga (Amoeba).